The sequence spans 600 residues: DDB1- and CUL4-associated factor 8-like protein 1 (600 aa).

The segment at 1–122 is disordered; that stretch reads MSHQEGSTGG…EEEQPRMCPR (122 aa). 2 stretches are compositionally biased toward acidic residues: residues 74–83 and 96–115; these read SSSEDVELES and EETE…EEEE. 7 WD repeats span residues 194–233, 237–278, 284–324, 332–372, 388–427, 435–475, and 479–518; these read SHAG…PVLN, GHDI…YCEN, KHRG…PASK, DKKV…KKEN, DFPT…GAQY, RNND…IIQF, and DRGD…ATEL. Residues 562-600 form a disordered region; that stretch reads PGWRDHGAEFPDEEELDESSSTSDTSEEEGQDRVQCIPS.

This sequence belongs to the WD repeat DCAF8 family.

The sequence is that of DDB1- and CUL4-associated factor 8-like protein 1 (DCAF8L1) from Homo sapiens (Human).